Consider the following 359-residue polypeptide: Protein FAM50 homolog (359 aa).

Disordered stretches follow at residues 122 to 150 (NLDDDEEEEEEDDEDHDKKQLKIKQEDQP) and 339 to 359 (PYDPTKSYDKYTIKDKDKSKK). Positions 123–136 (LDDDEEEEEEDDED) are enriched in acidic residues. Positions 137 to 150 (HDKKQLKIKQEDQP) are enriched in basic and acidic residues.

This sequence belongs to the FAM50 family.

The chain is Protein FAM50 homolog from Drosophila melanogaster (Fruit fly).